The following is a 1544-amino-acid chain: Rho guanine nucleotide exchange factor 12 (1544 aa).

A disordered region spans residues 1–62; sequence MSGTQSTITD…KTKSSSEESR (62 aa). Serine 2 carries the N-acetylserine modification. A compositionally biased stretch (basic and acidic residues) spans 28-45; sequence SPTDKKQKVERIASHDFD. Serine 41 is modified (phosphoserine). The PDZ domain maps to 72 to 151; sequence CVIIQKDDNG…LTVQGRPPGS (80 aa). The stretch at 194-262 forms a coiled coil; sequence MGEENNVVHN…LSKATGSAQD (69 aa). The segment at 247 to 346 is disordered; the sequence is PQLQEQLSKA…SLVGSPSTRI (100 aa). 2 stretches are compositionally biased toward polar residues: residues 249–260 and 293–309; these read LQEQLSKATGSA and DCSSGDASRPSSDNADS. Serine 309 is subject to Phosphoserine. Over residues 313–329 the composition is skewed to basic and acidic residues; sequence GPKERIYLEENPEKSET. The segment covering 330-344 has biased composition (polar residues); the sequence is IQDTDTQSLVGSPST. Position 341 is a phosphoserine (serine 341). The RGSL domain occupies 367 to 558; that stretch reads GQCSCFQSIE…LMYMKHLGVK (192 aa). A disordered region spans residues 570–706; it reads GRIGFLPKIK…GDTLDGTPRT (137 aa). Over residues 582–592 the composition is skewed to basic and acidic residues; sequence MKKDKEGEEKG. The segment covering 631-640 has biased composition (polar residues); it reads STPSSVSPEP. Serine 637 carries the post-translational modification Phosphoserine. Residues 663–676 show a composition bias toward low complexity; sequence ANSMSSVASGASFS. Phosphothreonine is present on threonine 736. Residues 787-977 enclose the DH domain; it reads KRQEVINELF…RQILNYVNQA (191 aa). The 114-residue stretch at 1019 to 1132 folds into the PH domain; the sequence is KMIHEGPLVW…WQDLICRMAA (114 aa). Positions 1138 to 1149 are enriched in polar residues; the sequence is STKPIPLPQSTP. Residues 1138–1179 are disordered; sequence STKPIPLPQSTPGEGDNDEEDPSKLKEEQHGISVTGLQSPDR. A phosphoserine mark is found at serine 1288, serine 1327, serine 1377, serine 1457, and serine 1541.

As to quaternary structure, interacts with GNA12 and GNA13, probably through the RGS-like domain. Interacts with RHOA, PLXNB1 and PLXNB2. Interacts through its PDZ domain with IGF1R beta subunit. Interacts with GCSAM. Found in a complex with ARHGEF11 and ARHGEF12; binding to ARHGEF11 and ARHGEF12 enhances CDC42 GEF activity of PLEKHG4B, and PLEKHG4B, in turn, inhibits ARHGEF11- and ARHGEF12-mediated RHOA activation. In terms of tissue distribution, ubiquitously expressed. Isoform 2 is found in jejunum and testis.

The protein localises to the cytoplasm. It is found in the membrane. May play a role in the regulation of RhoA GTPase by guanine nucleotide-binding alpha-12 (GNA12) and alpha-13 (GNA13). Acts as guanine nucleotide exchange factor (GEF) for RhoA GTPase and may act as GTPase-activating protein (GAP) for GNA12 and GNA13. In Homo sapiens (Human), this protein is Rho guanine nucleotide exchange factor 12 (ARHGEF12).